Reading from the N-terminus, the 418-residue chain is Bifunctional protein GlmU (418 aa).

A pyrophosphorylase region spans residues 1–236 (MAAVIVLAAG…VWQTEGVNDR (236 aa)). UDP-N-acetyl-alpha-D-glucosamine contacts are provided by residues 7–10 (LAAG), Lys21, Gln74, 79–80 (GT), 102–104 (YGD), Gly141, Glu155, Asn170, and Asn234. Asp104 is a Mg(2+) binding site. Residue Asn234 coordinates Mg(2+). The linker stretch occupies residues 237–257 (VQLARMNAEVNRRIVTGWMRA). The tract at residues 258 to 418 (GVTIIDPTST…DDTLNPEADQ (161 aa)) is N-acetyltransferase. Positions 339 and 357 each coordinate UDP-N-acetyl-alpha-D-glucosamine. His369 functions as the Proton acceptor in the catalytic mechanism. Position 372 (Tyr372) interacts with UDP-N-acetyl-alpha-D-glucosamine. Residue Ala386 coordinates acetyl-CoA.

This sequence in the N-terminal section; belongs to the N-acetylglucosamine-1-phosphate uridyltransferase family. In the C-terminal section; belongs to the transferase hexapeptide repeat family. As to quaternary structure, homotrimer. Requires Mg(2+) as cofactor.

The protein localises to the cytoplasm. It carries out the reaction alpha-D-glucosamine 1-phosphate + acetyl-CoA = N-acetyl-alpha-D-glucosamine 1-phosphate + CoA + H(+). It catalyses the reaction N-acetyl-alpha-D-glucosamine 1-phosphate + UTP + H(+) = UDP-N-acetyl-alpha-D-glucosamine + diphosphate. It functions in the pathway nucleotide-sugar biosynthesis; UDP-N-acetyl-alpha-D-glucosamine biosynthesis; N-acetyl-alpha-D-glucosamine 1-phosphate from alpha-D-glucosamine 6-phosphate (route II): step 2/2. The protein operates within nucleotide-sugar biosynthesis; UDP-N-acetyl-alpha-D-glucosamine biosynthesis; UDP-N-acetyl-alpha-D-glucosamine from N-acetyl-alpha-D-glucosamine 1-phosphate: step 1/1. Its pathway is bacterial outer membrane biogenesis; LPS lipid A biosynthesis. Functionally, catalyzes the last two sequential reactions in the de novo biosynthetic pathway for UDP-N-acetylglucosamine (UDP-GlcNAc). The C-terminal domain catalyzes the transfer of acetyl group from acetyl coenzyme A to glucosamine-1-phosphate (GlcN-1-P) to produce N-acetylglucosamine-1-phosphate (GlcNAc-1-P), which is converted into UDP-GlcNAc by the transfer of uridine 5-monophosphate (from uridine 5-triphosphate), a reaction catalyzed by the N-terminal domain. This is Bifunctional protein GlmU from Cutibacterium acnes (strain DSM 16379 / KPA171202) (Propionibacterium acnes).